The chain runs to 287 residues: ATP synthase gamma chain (287 aa).

Belongs to the ATPase gamma chain family. In terms of assembly, F-type ATPases have 2 components, CF(1) - the catalytic core - and CF(0) - the membrane proton channel. CF(1) has five subunits: alpha(3), beta(3), gamma(1), delta(1), epsilon(1). CF(0) has three main subunits: a, b and c.

The protein localises to the cell inner membrane. Produces ATP from ADP in the presence of a proton gradient across the membrane. The gamma chain is believed to be important in regulating ATPase activity and the flow of protons through the CF(0) complex. The chain is ATP synthase gamma chain from Shigella boydii serotype 4 (strain Sb227).